We begin with the raw amino-acid sequence, 160 residues long: Phosphopantetheine adenylyltransferase (160 aa).

Ser10 is a substrate binding site. Residues 10–11 (SF) and His18 contribute to the ATP site. Residues Lys42, Thr74, and Arg88 each coordinate substrate. ATP is bound by residues 89–91 (GLR), Glu99, and 124–130 (FYYISSR).

The protein belongs to the bacterial CoaD family. Homohexamer. Mg(2+) serves as cofactor.

It is found in the cytoplasm. It carries out the reaction (R)-4'-phosphopantetheine + ATP + H(+) = 3'-dephospho-CoA + diphosphate. It functions in the pathway cofactor biosynthesis; coenzyme A biosynthesis; CoA from (R)-pantothenate: step 4/5. Functionally, reversibly transfers an adenylyl group from ATP to 4'-phosphopantetheine, yielding dephospho-CoA (dPCoA) and pyrophosphate. This is Phosphopantetheine adenylyltransferase from Bdellovibrio bacteriovorus (strain ATCC 15356 / DSM 50701 / NCIMB 9529 / HD100).